A 485-amino-acid chain; its full sequence is NADH-quinone oxidoreductase subunit N (485 aa).

14 consecutive transmembrane segments (helical) span residues 8 to 28 (LIAL…MLSI), 35 to 55 (FLNA…LWFV), 71 to 91 (GFAM…CTFA), 105 to 125 (FYLL…ANHL), 127 to 147 (SLFL…GYAF), 159 to 179 (YTIL…LVYA), 203 to 223 (LLAG…LVPF), 235 to 255 (PAPV…GVVM), 271 to 291 (VVLA…ALSQ), 297 to 317 (LLGY…IALQ), 326 to 346 (VGVY…VVSL), 373 to 393 (AAVM…LGFI), 408 to 430 (WWLV…RVAV), and 455 to 475 (IVVL…QPLI).

This sequence belongs to the complex I subunit 2 family. In terms of assembly, NDH-1 is composed of 13 different subunits. Subunits NuoA, H, J, K, L, M, N constitute the membrane sector of the complex.

The protein localises to the cell inner membrane. It catalyses the reaction a quinone + NADH + 5 H(+)(in) = a quinol + NAD(+) + 4 H(+)(out). NDH-1 shuttles electrons from NADH, via FMN and iron-sulfur (Fe-S) centers, to quinones in the respiratory chain. The immediate electron acceptor for the enzyme in this species is believed to be ubiquinone. Couples the redox reaction to proton translocation (for every two electrons transferred, four hydrogen ions are translocated across the cytoplasmic membrane), and thus conserves the redox energy in a proton gradient. The sequence is that of NADH-quinone oxidoreductase subunit N from Shigella sonnei (strain Ss046).